The following is a 137-amino-acid chain: Basic phospholipase A2 homolog 2 (137 aa).

Positions Met1–Gly16 are cleaved as a signal peptide. Intrachain disulfides connect Cys42–Cys131, Cys44–Cys60, Cys59–Cys111, Cys65–Cys137, Cys66–Cys104, Cys73–Cys97, and Cys91–Cys102. The important for membrane-damaging activities in eukaryotes and bacteria; heparin-binding stretch occupies residues Lys121–Lys133.

The protein belongs to the phospholipase A2 family. Group II subfamily. K49 sub-subfamily. In terms of assembly, homodimer; non-covalently linked. Binds to heparin. Post-translationally, it binds long-chain fatty acids covalently by a rapid, spontaneous, and autocatalytic process. When acylated, it binds to the surface of liposomes and isolated muscle membranes, with the fatty acid moiety inserted into the lipid bilayer and possibly acting as an anchor. Expressed by the venom gland.

It localises to the secreted. Its activity is regulated as follows. Heparin inhibits the myotoxic activity. Suramin inhibits the myotoxic activity. High level of membrane cholesterol content reduces cytolytic activity, whereas low level of membrane cholesterol content increases cytolytic activity. Functionally, snake venom phospholipase A2 homolog that lacks enzymatic activity. Is myotoxic and induces a dose-dependent edema in the mouse foot pad. Also exhibits strong anticoagulant effects by binding to factor Xa (F10) and inhibiting the prothrombinase activity (IC(50) is 3 nM). In addition, it shows cytotoxic activity to a variety of cell types and bactericidal activity to a variety of Gram-negative and Gram-positive bacteria. Also induces a very rapid release of large amounts of potassium ions and ATP from muscle cells, which accounts for the pain reaction characteristic of viperid envenomations. The released ATP amplifies the effect of the myotoxins, acting as a 'danger signal', which spreads and causes further damage by acting on purinergic receptors. A model of myotoxic mechanism has been proposed: an apo Lys49-PLA2 is activated by the entrance of a hydrophobic molecule (e.g. fatty acid) at the hydrophobic channel of the protein leading to a reorientation of a monomer. This reorientation causes a transition between 'inactive' to 'active' states, causing alignment of C-terminal and membrane-docking sites (MDoS) side-by-side and putting the membrane-disruption sites (MDiS) in the same plane, exposed to solvent and in a symmetric position for both monomers. The MDoS region stabilizes the toxin on membrane by the interaction of charged residues with phospholipid head groups. Subsequently, the MDiS region destabilizes the membrane with penetration of hydrophobic residues. This insertion causes a disorganization of the membrane, allowing an uncontrolled influx of ions (i.e. calcium and sodium), and eventually triggering irreversible intracellular alterations and cell death. The chain is Basic phospholipase A2 homolog 2 from Bothrops asper (Terciopelo).